Reading from the N-terminus, the 654-residue chain is Fructose-1,6-bisphosphatase class 3 (654 aa).

The protein belongs to the FBPase class 3 family. Mn(2+) serves as cofactor.

It catalyses the reaction beta-D-fructose 1,6-bisphosphate + H2O = beta-D-fructose 6-phosphate + phosphate. It participates in carbohydrate biosynthesis; gluconeogenesis. In Staphylococcus haemolyticus (strain JCSC1435), this protein is Fructose-1,6-bisphosphatase class 3.